Consider the following 130-residue polypeptide: Transcription antitermination protein NusB (130 aa).

Belongs to the NusB family.

Its function is as follows. Involved in transcription antitermination. Required for transcription of ribosomal RNA (rRNA) genes. Binds specifically to the boxA antiterminator sequence of the ribosomal RNA (rrn) operons. This chain is Transcription antitermination protein NusB, found in Bacillus cereus (strain ATCC 10987 / NRS 248).